Consider the following 204-residue polypeptide: uncharacterized protein (204 aa).

A helical membrane pass occupies residues Ser-63 to Gly-83.

It localises to the membrane. This is an uncharacterized protein from Mycobacterium tuberculosis (strain ATCC 25618 / H37Rv).